Here is an 872-residue protein sequence, read N- to C-terminus: Leucine--tRNA ligase (872 aa).

A 'HIGH' region motif is present at residues 42 to 52 (PYPSGSLHMGH). Residues 634-638 (TMSKS) carry the 'KMSKS' region motif. Lys637 is an ATP binding site.

Belongs to the class-I aminoacyl-tRNA synthetase family.

It localises to the cytoplasm. It catalyses the reaction tRNA(Leu) + L-leucine + ATP = L-leucyl-tRNA(Leu) + AMP + diphosphate. The polypeptide is Leucine--tRNA ligase (Trichormus variabilis (strain ATCC 29413 / PCC 7937) (Anabaena variabilis)).